A 571-amino-acid polypeptide reads, in one-letter code: Germacrene B synthase TPS16CC (571 aa).

(2E,6E)-farnesyl diphosphate is bound by residues R287, D324, D328, R465, and D468. Mg(2+) contacts are provided by D324 and D328. The DDXXD motif signature appears at 324–328 (DDIYD). Positions 468, 472, and 476 each coordinate Mg(2+).

The protein belongs to the terpene synthase family. Tpsb subfamily. The cofactor is Mg(2+). Mn(2+) serves as cofactor. As to expression, highly expressed in glandular trichomes.

It catalyses the reaction (2E,6E)-farnesyl diphosphate = (1E,4E)-germacrene B + diphosphate. It functions in the pathway secondary metabolite biosynthesis; terpenoid biosynthesis. In terms of biological role, involved in sesquiterpene olefins biosynthesis, constituants of cannabinoids and terpenoids-rich resins. Catalyzes mainly the conversion of (2E)-farnesyl diphosphate to germacrene B, which is spontaneously converted to gamma-elemene as a thermal degradation product. In Cannabis sativa (Hemp), this protein is Germacrene B synthase TPS16CC.